The sequence spans 479 residues: Splicing factor ESS-2 homolog (479 aa).

The residue at position 1 (M1) is an N-acetylmethionine. 2 disordered regions span residues 1–38 (MGTP…RSRQ) and 95–152 (GKIS…PSLD). At T3 the chain carries Phosphothreonine. Positions 7–19 (SAGALFLSSASAP) are enriched in low complexity. Residues 135 to 145 (DDGEAGEEEEK) are compositionally biased toward acidic residues. A Glycyl lysine isopeptide (Lys-Gly) (interchain with G-Cter in SUMO2) cross-link involves residue K145. Phosphoserine is present on S295. T389 is subject to Phosphothreonine. Phosphoserine occurs at positions 394 and 398. A disordered region spans residues 415–479 (RALRASYTPS…PARRKASDFF (65 aa)). The span at 433 to 454 (TPAGGPQTPTSTPAPGSATRTP) shows a compositional bias: low complexity. Over residues 455–466 (LTQDPASITDNL) the composition is skewed to polar residues.

This sequence belongs to the ESS2 family. In terms of assembly, identified in the spliceosome C complex. Interacts with FRA10AC1. As to expression, in the adult, widely expressed with highest expression in the testis and brain. Also widely expressed in the embryo with highest levels in the anterior pons.

The protein localises to the nucleus. Its function is as follows. May be involved in pre-mRNA splicing. The polypeptide is Splicing factor ESS-2 homolog (Ess2) (Mus musculus (Mouse)).